Consider the following 265-residue polypeptide: Novel plant SNARE 11 (265 aa).

At M1–C215 the chain is on the cytoplasmic side. Residues Q30–A75 are a coiled coil. The 63-residue stretch at N144–I206 folds into the t-SNARE coiled-coil homology domain. Residues I216–V236 traverse the membrane as a helical; Anchor for type IV membrane protein segment. At N237–Y265 the chain is on the vesicular side.

The protein belongs to the novel plant SNARE family. In terms of assembly, interacts with KNOLLE to form a t-SNARE complex. Does not interact with SYP21, VTI12 or VPS45. In terms of tissue distribution, expressed in roots, stems, flower, siliques, expanding leaves, but not in mature leaves. Not limited to dividing cells.

The protein localises to the membrane. In terms of biological role, t-SNARE involved in diverse vesicle trafficking and membrane fusion processes, including cell plate formation. In Arabidopsis thaliana (Mouse-ear cress), this protein is Novel plant SNARE 11 (NPSN11).